Consider the following 513-residue polypeptide: ATP synthase subunit alpha (513 aa).

Gly169–Thr176 serves as a coordination point for ATP.

Belongs to the ATPase alpha/beta chains family. In terms of assembly, F-type ATPases have 2 components, CF(1) - the catalytic core - and CF(0) - the membrane proton channel. CF(1) has five subunits: alpha(3), beta(3), gamma(1), delta(1), epsilon(1). CF(0) has three main subunits: a(1), b(2) and c(9-12). The alpha and beta chains form an alternating ring which encloses part of the gamma chain. CF(1) is attached to CF(0) by a central stalk formed by the gamma and epsilon chains, while a peripheral stalk is formed by the delta and b chains.

The protein resides in the cell inner membrane. It catalyses the reaction ATP + H2O + 4 H(+)(in) = ADP + phosphate + 5 H(+)(out). Produces ATP from ADP in the presence of a proton gradient across the membrane. The alpha chain is a regulatory subunit. This Shewanella amazonensis (strain ATCC BAA-1098 / SB2B) protein is ATP synthase subunit alpha.